The chain runs to 183 residues: Large ribosomal subunit protein uL6 (183 aa).

The protein belongs to the universal ribosomal protein uL6 family. In terms of assembly, part of the 50S ribosomal subunit.

Functionally, this protein binds to the 23S rRNA, and is important in its secondary structure. It is located near the subunit interface in the base of the L7/L12 stalk, and near the tRNA binding site of the peptidyltransferase center. In Chlamydia trachomatis serovar L2 (strain ATCC VR-902B / DSM 19102 / 434/Bu), this protein is Large ribosomal subunit protein uL6.